A 185-amino-acid chain; its full sequence is Ribosome-recycling factor (185 aa).

It belongs to the RRF family.

It is found in the cytoplasm. Its function is as follows. Responsible for the release of ribosomes from messenger RNA at the termination of protein biosynthesis. May increase the efficiency of translation by recycling ribosomes from one round of translation to another. The chain is Ribosome-recycling factor from Streptococcus pneumoniae serotype 19F (strain G54).